The sequence spans 210 residues: Thymidylate kinase (210 aa).

Position 10–17 (10–17 (GGEGAGKS)) interacts with ATP.

The protein belongs to the thymidylate kinase family.

The catalysed reaction is dTMP + ATP = dTDP + ADP. Functionally, phosphorylation of dTMP to form dTDP in both de novo and salvage pathways of dTTP synthesis. This is Thymidylate kinase from Magnetococcus marinus (strain ATCC BAA-1437 / JCM 17883 / MC-1).